The chain runs to 380 residues: Glucose-1-phosphate adenylyltransferase (380 aa).

Alpha-D-glucose 1-phosphate contacts are provided by residues Y99, G164, 179-180 (EK), and S190.

The protein belongs to the bacterial/plant glucose-1-phosphate adenylyltransferase family. Homotetramer.

The enzyme catalyses alpha-D-glucose 1-phosphate + ATP + H(+) = ADP-alpha-D-glucose + diphosphate. It functions in the pathway glycan biosynthesis; glycogen biosynthesis. Its function is as follows. Involved in the biosynthesis of ADP-glucose, a building block required for the elongation reactions to produce glycogen. Catalyzes the reaction between ATP and alpha-D-glucose 1-phosphate (G1P) to produce pyrophosphate and ADP-Glc. The chain is Glucose-1-phosphate adenylyltransferase from Bacillus subtilis (strain 168).